An 872-amino-acid chain; its full sequence is Lysosomal cholesterol signaling protein (872 aa).

The Lumenal portion of the chain corresponds to 1-40; the sequence is MNSFSNLPAENLTIAVNMTKTLPTAVMHGFNSTNDPPSMS. The interval 3-372 is PIN-like transporter; that stretch reads SFSNLPAENL…SAWLLTFPTM (370 aa). Residues Asn-11, Asn-17, and Asn-31 are each glycosylated (N-linked (GlcNAc...) asparagine). Residues 41–61 traverse the membrane as a helical segment; the sequence is ITRLFPALLECFGIVLCGYIA. Residues Phe-45 and Tyr-59 each contribute to the cholesterol site. At 62–81 the chain is on the cytoplasmic side; it reads GRANVITSTQAKGLGNFVSR. A helical transmembrane segment spans residues 82–102; it reads FALPALLFKNMVVLNFSNVDW. Topologically, residues 103 to 106 are lumenal; the sequence is SFLY. A helical transmembrane segment spans residues 107-127; it reads SILIAKASVFFIVCVLTLLVA. Residues 128–135 lie on the Cytoplasmic side of the membrane; it reads SPDSRFSK. A discontinuously helical membrane pass occupies residues 136 to 156; the sequence is AGLFPIFATQSNDFALGYPIV. Topologically, residues 157–169 are lumenal; sequence EALYQTTYPEYLQ. A helical membrane pass occupies residues 170 to 190; that stretch reads YIYLVAPISLMMLNPIGFIFC. Over 191–215 the chain is Cytoplasmic; it reads EIQKWKDTQNASQNKIKIVGLGLLR. A discontinuously helical transmembrane segment spans residues 216 to 236; the sequence is VLQNPIVFMVFIGIAFNFILD. At 237–245 the chain is on the lumenal side; the sequence is RKVPVYVEN. Residues 246-266 traverse the membrane as a discontinuously helical segment; sequence FLDGLGNSFSGSALFYLGLTM. The Cytoplasmic segment spans residues 267-275; the sequence is VGKIKRLKK. The cholesterol site is built by Gly-268, Lys-269, and Ile-270. Residues 276–296 traverse the membrane as a helical segment; that stretch reads SAFVVLILLITAKLLVLPLLC. Residues 297-317 lie on the Lumenal side of the membrane; that stretch reads REMVELLDKGDSVVNHTSLSN. Asn-311 carries an N-linked (GlcNAc...) asparagine glycan. The chain crosses the membrane as a discontinuously helical span at residues 318–338; sequence YAFLYGVFPVAPGVAIFATQF. Topologically, residues 339–348 are cytoplasmic; the sequence is NMEVEIITSG. A helical transmembrane segment spans residues 349 to 369; sequence MVISTFVSAPIMYVSAWLLTF. Residues 370 to 383 are Lumenal-facing; it reads PTMDPKPLAYAIQN. The segment at 382 to 719 is GPCR; it reads QNVSFDISIV…FGIFGLDKHL (338 aa). The N-linked (GlcNAc...) asparagine glycan is linked to Asn-383. Residues 384-404 form a helical membrane-spanning segment; sequence VSFDISIVSLISLIWSQAILL. Residues 405-416 are Cytoplasmic-facing; it reads LSKKYKQLPHML. Residues 417 to 437 traverse the membrane as a helical segment; sequence TTNLLIAQSIVCAGMMIWNFV. Residues 438–440 lie on the Lumenal side of the membrane; it reads KEK. Residues 441-461 form a helical membrane-spanning segment; that stretch reads NFVGQILVFVLLYSSLYSTYL. The Cytoplasmic segment spans residues 462-482; sequence WTGLLAISLFLLKKRERVQIP. A helical transmembrane segment spans residues 483–503; sequence VGIIIISGWGIPALLVGVLLI. The Lumenal portion of the chain corresponds to 504–522; the sequence is TGKHSGDSIDSAFFYGKEQ. The helical transmembrane segment at 523–543 threads the bilayer; sequence MITTAVTLFCSILIAGISLMC. The Cytoplasmic segment spans residues 544-662; the sequence is MNRTAQAGSY…GDQQLTRHVL (119 aa). Position 659 (Arg-659) interacts with cholesterol. Residues 663–683 traverse the membrane as a helical segment; it reads LCLLLIIGLFANLSSCLWWLF. The Lumenal segment spans residues 684-693; it reads NQEPGRLYVE. Residues 694–714 form a helical membrane-spanning segment; sequence LQFFCAVFNFGQGFISFGIFG. Over 715 to 872 the chain is Cytoplasmic; the sequence is LDKHLIILPF…SSPPSHSPKT (158 aa). The DEP domain occupies 759-837; sequence YHRDLCIRNI…DEYLFYRFLQ (79 aa).

Homodimer; via the transporter region and DEP domain. Interacts with the GATOR1 complex; preventing interaction between GATOR1 and KICSTOR; interaction is disrupted upon cholesterol starvation.

It is found in the lysosome membrane. Functionally, cholesterol-binding protein that acts as a regulator of mTORC1 signaling pathway. Acts as a sensor of cholesterol to signal cholesterol sufficiency to mTORC1: in presence of cholesterol, binds cholesterol, leading to disruption of the interaction between the GATOR1 and KICSTOR complexes and promotion of mTORC1 signaling. Upon cholesterol starvation, GPR155/LYCHOS is unable to perturb the association between GATOR1 and KICSTOR, leading to mTORC1 signaling inhibition. Binds indole-3-acetic acid and may play a role in tryptophan metabolism. In Pongo abelii (Sumatran orangutan), this protein is Lysosomal cholesterol signaling protein (GPR155).